Reading from the N-terminus, the 504-residue chain is Cytochrome P450 2D10 (504 aa).

O-linked (GlcNAc) serine glycosylation occurs at serine 382. Cysteine 446 contacts heme.

The protein belongs to the cytochrome P450 family. Heme is required as a cofactor.

The protein resides in the endoplasmic reticulum membrane. Its subcellular location is the microsome membrane. It catalyses the reaction an organic molecule + reduced [NADPH--hemoprotein reductase] + O2 = an alcohol + oxidized [NADPH--hemoprotein reductase] + H2O + H(+). In terms of biological role, cytochromes P450 are a group of heme-thiolate monooxygenases. In liver microsomes, this enzyme is involved in an NADPH-dependent electron transport pathway. It oxidizes a variety of structurally unrelated compounds, including steroids, fatty acids, and xenobiotics. The sequence is that of Cytochrome P450 2D10 (Cyp2d10) from Rattus norvegicus (Rat).